Here is a 433-residue protein sequence, read N- to C-terminus: Pyrimidine-nucleoside phosphorylase (433 aa).

81-83 (KHS) is a phosphate binding site. The K(+) site is built by Gly88 and Thr90. Residues Thr92, 108 to 110 (KMS), and Thr120 each bind phosphate. Substrate contacts are provided by Arg168 and Lys187. 3 residues coordinate K(+): Leu243, Ala246, and Glu255.

Belongs to the thymidine/pyrimidine-nucleoside phosphorylase family. As to quaternary structure, homodimer. K(+) is required as a cofactor.

It catalyses the reaction uridine + phosphate = alpha-D-ribose 1-phosphate + uracil. It carries out the reaction thymidine + phosphate = 2-deoxy-alpha-D-ribose 1-phosphate + thymine. The catalysed reaction is 2'-deoxyuridine + phosphate = 2-deoxy-alpha-D-ribose 1-phosphate + uracil. In terms of biological role, catalyzes phosphorolysis of the pyrimidine nucleosides uridine, thymidine and 2'-deoxyuridine with the formation of the corresponding pyrimidine base and ribose-1-phosphate. The protein is Pyrimidine-nucleoside phosphorylase (pdp) of Staphylococcus epidermidis (strain ATCC 12228 / FDA PCI 1200).